A 262-amino-acid polypeptide reads, in one-letter code: MAVGKNKRISKGRKGGKKKAVDPFSKKDWYDVKAPSIFTHRNVGKTLVSRTQGTKIASEGLKHRVFEVSLADLQGDEDNAYRKIRLRAEDVQGRNVLCQFWGMDFTTDKLRSLVKKWQTLIEAHVDVKTTDSYTLRLFCIAFTKRRANQVKRTCYAQSSQIRQIRRKMRDIMVREASSCDLKDLVAKFIPEAIGREIEKATQGIYPLQNVFIRKVKILKAPKFDLGKLMDVHGDYSAEDVGVKVDRPADEMAVEEPTEIIGA.

The span at 1-18 (MAVGKNKRISKGRKGGKK) shows a compositional bias: basic residues. Residues 1–21 (MAVGKNKRISKGRKGGKKKAV) are disordered.

This sequence belongs to the eukaryotic ribosomal protein eS1 family. Component of the small ribosomal subunit. Mature ribosomes consist of a small (40S) and a large (60S) subunit. The 40S subunit contains about 33 different proteins and 1 molecule of RNA (18S). The 60S subunit contains about 49 different proteins and 3 molecules of RNA (25S, 5.8S and 5S).

It localises to the cytoplasm. This chain is Small ribosomal subunit protein eS1z, found in Arabidopsis thaliana (Mouse-ear cress).